The chain runs to 259 residues: MSRINITKKIYCSVFLFLFLFLSYISNYEKVNDEMYEMGEMDEIVSIVRDSMWYIPNVFMDDGKNEGHVSVNNVCHMYFTFFDVDTSSHLFKLVIKHCDLNKRGNSPLHCYTMNTRFNPSVLKILLHHGMRNFDSKDEKGHHYLIHSLSIDNKIFDILTDTIDDFSKSSDLLLCYLRYKFNGSLNYYVLYKGSDPNCADEDELTSLHYYCKHISTFYKSNYYKLSHTKMRAEKRFIYAIIDYGANINAVTHLPSTVYQT.

It belongs to the orthopoxvirus OPG003 family.

The sequence is that of Truncated Ankyrin repeat protein OPG003 (OPG003) from Vaccinia virus (strain Copenhagen) (VACV).